Reading from the N-terminus, the 362-residue chain is Cobalt-precorrin-5B C(1)-methyltransferase (362 aa).

Belongs to the CbiD family.

The catalysed reaction is Co-precorrin-5B + S-adenosyl-L-methionine = Co-precorrin-6A + S-adenosyl-L-homocysteine. It functions in the pathway cofactor biosynthesis; adenosylcobalamin biosynthesis; cob(II)yrinate a,c-diamide from sirohydrochlorin (anaerobic route): step 6/10. Catalyzes the methylation of C-1 in cobalt-precorrin-5B to form cobalt-precorrin-6A. The chain is Cobalt-precorrin-5B C(1)-methyltransferase from Desulfotalea psychrophila (strain LSv54 / DSM 12343).